The chain runs to 349 residues: Glucose 1-dehydrogenase 1 (349 aa).

C39 contacts Zn(2+). T41 serves as a coordination point for substrate. Positions 64 and 65 each coordinate Zn(2+). 2 residues coordinate substrate: E110 and E146. Residue E146 coordinates Zn(2+). Residues 178–181 (AGPI), 260–262 (LGV), and 289–291 (SVN) each bind NADP(+). N291 provides a ligand contact to substrate.

It belongs to the zinc-containing alcohol dehydrogenase family. Glucose 1-dehydrogenase subfamily. Requires Zn(2+) as cofactor.

It catalyses the reaction D-glucose + NAD(+) = D-glucono-1,5-lactone + NADH + H(+). The enzyme catalyses D-glucose + NADP(+) = D-glucono-1,5-lactone + NADPH + H(+). Functionally, catalyzes the NAD(P)(+)-dependent oxidation of D-glucose to D-gluconate via gluconolactone. Can utilize both NAD(+) and NADP(+) as electron acceptor. Is involved in the degradation of glucose through a non-phosphorylative variant of the Entner-Doudoroff pathway. This chain is Glucose 1-dehydrogenase 1, found in Caldivirga maquilingensis (strain ATCC 700844 / DSM 13496 / JCM 10307 / IC-167).